We begin with the raw amino-acid sequence, 100 residues long: uncharacterized protein (100 aa).

This is an uncharacterized protein from Schizosaccharomyces pombe (strain 972 / ATCC 24843) (Fission yeast).